The primary structure comprises 251 residues: Large ribosomal subunit protein uL3 (251 aa).

Gln-151 bears the N5-methylglutamine mark. The disordered stretch occupies residues 219-251; it reads PGAFRRNGEEAAAAPAAEAPAETPAEEAGQEGA. The segment covering 228–241 has biased composition (low complexity); that stretch reads EAAAAPAAEAPAET. The segment covering 242–251 has biased composition (acidic residues); the sequence is PAEEAGQEGA.

Belongs to the universal ribosomal protein uL3 family. In terms of assembly, part of the 50S ribosomal subunit. Forms a cluster with proteins L14 and L19. In terms of processing, methylated by PrmB.

Its function is as follows. One of the primary rRNA binding proteins, it binds directly near the 3'-end of the 23S rRNA, where it nucleates assembly of the 50S subunit. The protein is Large ribosomal subunit protein uL3 of Parvibaculum lavamentivorans (strain DS-1 / DSM 13023 / NCIMB 13966).